The chain runs to 312 residues: Ribosomal protein L11 methyltransferase (312 aa).

4 residues coordinate S-adenosyl-L-methionine: Thr162, Gly183, Asp205, and Asn248.

The protein belongs to the methyltransferase superfamily. PrmA family.

It localises to the cytoplasm. The catalysed reaction is L-lysyl-[protein] + 3 S-adenosyl-L-methionine = N(6),N(6),N(6)-trimethyl-L-lysyl-[protein] + 3 S-adenosyl-L-homocysteine + 3 H(+). Functionally, methylates ribosomal protein L11. The chain is Ribosomal protein L11 methyltransferase from Bacillus cereus (strain B4264).